The primary structure comprises 150 residues: Transcriptional regulator MraZ (150 aa).

SpoVT-AbrB domains are found at residues S7–E55 and A84–S127.

This sequence belongs to the MraZ family. In terms of assembly, forms oligomers.

The protein resides in the cytoplasm. The protein localises to the nucleoid. The polypeptide is Transcriptional regulator MraZ (Marinobacter nauticus (strain ATCC 700491 / DSM 11845 / VT8) (Marinobacter aquaeolei)).